Here is a 162-residue protein sequence, read N- to C-terminus: Phosphopantetheine adenylyltransferase (162 aa).

T9 is a substrate binding site. ATP contacts are provided by residues 9–10 and H17; that span reads TF. The substrate site is built by K41, L76, and R90. Residues 91 to 93, E101, and 126 to 132 each bind ATP; these read GLR and HQAIASR.

Belongs to the bacterial CoaD family. As to quaternary structure, homohexamer. Mg(2+) is required as a cofactor.

Its subcellular location is the cytoplasm. The catalysed reaction is (R)-4'-phosphopantetheine + ATP + H(+) = 3'-dephospho-CoA + diphosphate. It participates in cofactor biosynthesis; coenzyme A biosynthesis; CoA from (R)-pantothenate: step 4/5. In terms of biological role, reversibly transfers an adenylyl group from ATP to 4'-phosphopantetheine, yielding dephospho-CoA (dPCoA) and pyrophosphate. The chain is Phosphopantetheine adenylyltransferase from Caulobacter sp. (strain K31).